The primary structure comprises 265 residues: Orotidine 5'-phosphate decarboxylase (265 aa).

Substrate contacts are provided by residues Asp37, 59–61 (KTH), 91–100 (DRKFADIGNT), Tyr217, and Arg235. Lys93 functions as the Proton donor in the catalytic mechanism.

It belongs to the OMP decarboxylase family.

It catalyses the reaction orotidine 5'-phosphate + H(+) = UMP + CO2. It functions in the pathway pyrimidine metabolism; UMP biosynthesis via de novo pathway; UMP from orotate: step 2/2. This chain is Orotidine 5'-phosphate decarboxylase (URA3), found in Diutina rugosa (Yeast).